A 185-amino-acid chain; its full sequence is Prenylated Rab acceptor protein 1 (185 aa).

Topologically, residues 1–78 (MAAQKDQQKD…RNVEYYQSNY (78 aa)) are cytoplasmic. Positions 30-54 (AGREWLERRRATIRPWSTFVDQQRF) are required for interaction with prenylated RAB3A and VAMP2. A run of 2 helical transmembrane segments spans residues 79 to 94 (VFVF…VTSP) and 95 to 112 (MLLV…ILYL). Topologically, residues 113–131 (RTLESKLVLFGREVSPAHQ) are cytoplasmic. The next 2 helical transmembrane spans lie at 132–148 (YALA…LAGA) and 149–165 (GSAV…VIGS). The tract at residues 165–185 (SHAAFHQIEAVDGEELQMEPV) is required for interaction with GDI1. The Cytoplasmic segment spans residues 166-185 (HAAFHQIEAVDGEELQMEPV). The tract at residues 175 to 185 (VDGEELQMEPV) is required for interaction with prenylated RAB3A and VAMP2. The homodimerization stretch occupies residues 175–185 (VDGEELQMEPV).

It belongs to the PRA1 family. Homodimer. Interacts with VAMP2 (synaptobrevin-2), GDI1, and PCLO. Interacts specifically with prenylated Rab proteins; strongly with RAB4B, RAB5A and RAB5C, and weakly with RAB4A, RAB6, RAB7A, RAB17 and RAB22. Interacts with NDRG1. In terms of tissue distribution, ubiquitous. Strongest expression found in placenta, pituitary gland, kidney, lung and stomach.

Its subcellular location is the cell membrane. The protein localises to the cytoplasm. It localises to the golgi apparatus. It is found in the cytoplasmic vesicle. The protein resides in the secretory vesicle. Its subcellular location is the synaptic vesicle. In terms of biological role, general Rab protein regulator required for vesicle formation from the Golgi complex. May control vesicle docking and fusion by mediating the action of Rab GTPases to the SNARE complexes. In addition it inhibits the removal of Rab GTPases from the membrane by GDI. The protein is Prenylated Rab acceptor protein 1 (RABAC1) of Homo sapiens (Human).